A 295-amino-acid chain; its full sequence is Cyclic dipyrimidine nucleotide synthase CdnE (295 aa).

A disordered region spans residues 1-28 (MAKYTEDQLTSWTKPPSDSEQTKLENSE). A compositionally biased stretch (polar residues) spans 7–19 (DQLTSWTKPPSDS). UTP is bound by residues Gln51 and Ser53. Asp67 provides a ligand contact to Mg(2+). Positions 123, 169, 197, 217, and 276 each coordinate UTP. The Pyrimidine specificity motif (R/Q)xW in donor pocket motif lies at 275–277 (RKW).

This sequence belongs to the CD-NTase family. E02 subfamily. Monomer. Requires Mg(2+) as cofactor.

The enzyme catalyses 2 UTP = c-di-UMP + 2 diphosphate. It carries out the reaction UTP + CTP = cyclic CMP-UMP + 2 diphosphate. Cyclic nucleotide synthase (second messenger synthase) of a CBASS antivirus system. CBASS (cyclic oligonucleotide-based antiphage signaling system) provides immunity against bacteriophage. The CD-NTase protein synthesizes cyclic nucleotides in response to infection; these serve as specific second messenger signals. The signals activate a diverse range of effectors, leading to bacterial cell death and thus abortive phage infection. A type I-B(UU) CBASS system. This is Cyclic dipyrimidine nucleotide synthase CdnE from Cecembia lonarensis (strain CCUG 58316 / KCTC 22772 / LW9).